We begin with the raw amino-acid sequence, 100 residues long: MKITQEEVSHVAKLSKLAFSPEETAEFATTLSKIVDMVELLNEVDTEGVPFTSNVAANINYMREDVAQPGWNREELFQNVPEKERGYIKVPAILDDGGDA.

Belongs to the GatC family. As to quaternary structure, heterotrimer of A, B and C subunits.

It carries out the reaction L-glutamyl-tRNA(Gln) + L-glutamine + ATP + H2O = L-glutaminyl-tRNA(Gln) + L-glutamate + ADP + phosphate + H(+). The enzyme catalyses L-aspartyl-tRNA(Asn) + L-glutamine + ATP + H2O = L-asparaginyl-tRNA(Asn) + L-glutamate + ADP + phosphate + 2 H(+). Functionally, allows the formation of correctly charged Asn-tRNA(Asn) or Gln-tRNA(Gln) through the transamidation of misacylated Asp-tRNA(Asn) or Glu-tRNA(Gln) in organisms which lack either or both of asparaginyl-tRNA or glutaminyl-tRNA synthetases. The reaction takes place in the presence of glutamine and ATP through an activated phospho-Asp-tRNA(Asn) or phospho-Glu-tRNA(Gln). This Streptococcus gordonii (strain Challis / ATCC 35105 / BCRC 15272 / CH1 / DL1 / V288) protein is Aspartyl/glutamyl-tRNA(Asn/Gln) amidotransferase subunit C.